The chain runs to 434 residues: Serine--tRNA ligase (434 aa).

239 to 241 is an L-serine binding site; sequence TAE. 270–272 contributes to the ATP binding site; that stretch reads RSE. Glu293 lines the L-serine pocket. 357 to 360 is a binding site for ATP; it reads EISS. Ser393 contributes to the L-serine binding site.

The protein belongs to the class-II aminoacyl-tRNA synthetase family. Type-1 seryl-tRNA synthetase subfamily. As to quaternary structure, homodimer. The tRNA molecule binds across the dimer.

It localises to the cytoplasm. The catalysed reaction is tRNA(Ser) + L-serine + ATP = L-seryl-tRNA(Ser) + AMP + diphosphate + H(+). It catalyses the reaction tRNA(Sec) + L-serine + ATP = L-seryl-tRNA(Sec) + AMP + diphosphate + H(+). It participates in aminoacyl-tRNA biosynthesis; selenocysteinyl-tRNA(Sec) biosynthesis; L-seryl-tRNA(Sec) from L-serine and tRNA(Sec): step 1/1. Catalyzes the attachment of serine to tRNA(Ser). Is also able to aminoacylate tRNA(Sec) with serine, to form the misacylated tRNA L-seryl-tRNA(Sec), which will be further converted into selenocysteinyl-tRNA(Sec). The chain is Serine--tRNA ligase from Mesorhizobium japonicum (strain LMG 29417 / CECT 9101 / MAFF 303099) (Mesorhizobium loti (strain MAFF 303099)).